The sequence spans 120 residues: Lysozyme (120 aa).

One can recognise a C-type lysozyme domain in the interval 1-120; the sequence is KRFTRCGLVN…NHSNPDISSC (120 aa). Disulfide bonds link cysteine 6-cysteine 120, cysteine 27-cysteine 110, cysteine 62-cysteine 76, and cysteine 72-cysteine 90. Active-site residues include glutamate 32 and aspartate 50.

This sequence belongs to the glycosyl hydrolase 22 family. In terms of assembly, monomer.

The enzyme catalyses Hydrolysis of (1-&gt;4)-beta-linkages between N-acetylmuramic acid and N-acetyl-D-glucosamine residues in a peptidoglycan and between N-acetyl-D-glucosamine residues in chitodextrins.. Lysozymes have primarily a bacteriolytic function; those in tissues and body fluids are associated with the monocyte-macrophage system and enhance the activity of immunoagents. The protein is Lysozyme of Antheraea mylitta (Tasar silkworm).